The sequence spans 173 residues: U1 small nuclear ribonucleoprotein C (173 aa).

The Matrin-type zinc finger occupies 4–36; that stretch reads YYCDYCDTYLTHDSPSVRKTHCQGRKHKDNVKF. The disordered stretch occupies residues 72 to 100; that stretch reads AAIPPPANMQGPPRPVPPGPMGPGPNMLG. The span at 73 to 94 shows a compositional bias: pro residues; sequence AIPPPANMQGPPRPVPPGPMGP.

The protein belongs to the U1 small nuclear ribonucleoprotein C family. As to quaternary structure, U1 snRNP is composed of the 7 core Sm proteins B/B', D1, D2, D3, E, F and G that assemble in a heptameric protein ring on the Sm site of the small nuclear RNA to form the core snRNP, and at least 3 U1 snRNP-specific proteins U1-70K, U1-A and U1-C. U1-C interacts with U1 snRNA and the 5' splice-site region of the pre-mRNA.

It localises to the nucleus. In terms of biological role, component of the spliceosomal U1 snRNP, which is essential for recognition of the pre-mRNA 5' splice-site and the subsequent assembly of the spliceosome. U1-C is directly involved in initial 5' splice-site recognition for both constitutive and regulated alternative splicing. The interaction with the 5' splice-site seems to precede base-pairing between the pre-mRNA and the U1 snRNA. Stimulates commitment or early (E) complex formation by stabilizing the base pairing of the 5' end of the U1 snRNA and the 5' splice-site region. The chain is U1 small nuclear ribonucleoprotein C from Pediculus humanus subsp. corporis (Body louse).